The following is a 150-amino-acid chain: Large ribosomal subunit protein bL9 (150 aa).

Belongs to the bacterial ribosomal protein bL9 family.

Functionally, binds to the 23S rRNA. The protein is Large ribosomal subunit protein bL9 of Alteromonas mediterranea (strain DSM 17117 / CIP 110805 / LMG 28347 / Deep ecotype).